A 497-amino-acid polypeptide reads, in one-letter code: L-carnitine dehydrogenase/betainyl-CoA thioesterase (497 aa).

Residues 1 to 335 are L-carnitine dehydrogenase; sequence MSFITKAACV…AKLWANARKP (335 aa). 11 to 16 is a binding site for NAD(+); that stretch reads GGGVIG. Residues 330–335 are important for dehydrogenase activity; sequence ANARKP. The segment at 336–497 is betainyl-CoA thioesterase; sequence EADLGDVKPL…AGRFVGQKRA (162 aa).

This sequence in the N-terminal section; belongs to the 3-hydroxyacyl-CoA dehydrogenase family. L-carnitine dehydrogenase subfamily. The protein in the C-terminal section; belongs to the betainyl-CoA thioesterase family. In terms of assembly, homodimer.

Its subcellular location is the cytoplasm. The catalysed reaction is carnitine + NAD(+) = 3-dehydrocarnitine + NADH + H(+). It catalyses the reaction N,N,N-trimethylglycyl-CoA + H2O = glycine betaine + CoA + H(+). It participates in amine and polyamine metabolism; carnitine metabolism. Catalyzes the NAD(+)-dependent oxidation of L-carnitine to 3-dehydrocarnitine. Probably also catalyzes the cleavage of betainyl-CoA (N,N,N-trimethylglycyl-CoA) into glycine betaine and coenzyme A. Despite a high similarity to 3-hydroxyacyl-CoA dehydrogenases, cannot dehydrogenate 3-hydroxybutylate and 3-hydroxybutyl-CoA. Is probably involved in a L-carnitine degradation pathway that allows Rhizobium sp. YS-240 to grow on L-carnitine as the sole source of carbon and nitrogen. The protein is L-carnitine dehydrogenase/betainyl-CoA thioesterase of Rhizobium sp.